Here is a 382-residue protein sequence, read N- to C-terminus: DNA double-strand break repair protein Mre11 (382 aa).

Residues Asp8, His10, Asp49, and Asp84 each contribute to the Mn(2+) site. The Proton donor role is filled by His85. Residues His156, His187, and His189 each contribute to the Mn(2+) site.

The protein belongs to the MRE11/RAD32 family. As to quaternary structure, homodimer. Forms a heterotetramer composed of two Mre11 subunits and two Rad50 subunits. Interacts with Rad50 and HerA. It depends on Mn(2+) as a cofactor.

With respect to regulation, nuclease activity is regulated by Rad50. Part of the Rad50/Mre11 complex, which is involved in the early steps of DNA double-strand break (DSB) repair. The complex may facilitate opening of the processed DNA ends to aid in the recruitment of HerA and NurA. Mre11 binds to DSB ends and has both double-stranded 3'-5' exonuclease activity and single-stranded endonuclease activity. Recruited immediately to chromosomal DNA after gamma irradiation, and remains DNA bound in the course of DNA repair. The chain is DNA double-strand break repair protein Mre11 from Sulfolobus acidocaldarius (strain ATCC 33909 / DSM 639 / JCM 8929 / NBRC 15157 / NCIMB 11770).